Reading from the N-terminus, the 284-residue chain is Bifunctional protein FolD (284 aa).

NADP(+) is bound by residues 166 to 168 (GAS) and Ile232.

It belongs to the tetrahydrofolate dehydrogenase/cyclohydrolase family. Homodimer.

It catalyses the reaction (6R)-5,10-methylene-5,6,7,8-tetrahydrofolate + NADP(+) = (6R)-5,10-methenyltetrahydrofolate + NADPH. The catalysed reaction is (6R)-5,10-methenyltetrahydrofolate + H2O = (6R)-10-formyltetrahydrofolate + H(+). The protein operates within one-carbon metabolism; tetrahydrofolate interconversion. Functionally, catalyzes the oxidation of 5,10-methylenetetrahydrofolate to 5,10-methenyltetrahydrofolate and then the hydrolysis of 5,10-methenyltetrahydrofolate to 10-formyltetrahydrofolate. In Stutzerimonas stutzeri (strain A1501) (Pseudomonas stutzeri), this protein is Bifunctional protein FolD.